A 798-amino-acid chain; its full sequence is Acetyl-CoA decarbonylase/synthase complex subunit alpha 2 (798 aa).

The [4Fe-4S] cluster site is built by Cys65, Cys68, Cys69, Cys71, Cys76, and Cys86. His109 lines the CO pocket. 3 residues coordinate [Ni-4Fe-4S] cluster: His246, Cys274, and Cys313. 4Fe-4S ferredoxin-type domains lie at 395-424 (EEQFMEYARACTQCGNCTIACPQGIRIGEA) and 434-463 (SKLEKEWDVCIACGRCEQVCPKGIPIIDMY). [4Fe-4S] cluster is bound by residues Cys405, Cys408, Cys411, Cys415, Cys443, Cys446, Cys449, and Cys453. [Ni-4Fe-4S] cluster is bound by residues Cys511, Cys540, and Cys575.

The protein belongs to the Ni-containing carbon monoxide dehydrogenase family. In terms of assembly, heterotetramer of two alpha and two epsilon subunits. The ACDS complex is made up of alpha, epsilon, beta, gamma and delta subunits with a probable stoichiometry of (alpha(2)epsilon(2))(4)-beta(8)-(gamma(1)delta(1))(8). It depends on [4Fe-4S] cluster as a cofactor. The cofactor is [Ni-4Fe-4S] cluster.

The enzyme catalyses CO + 2 oxidized [2Fe-2S]-[ferredoxin] + H2O = 2 reduced [2Fe-2S]-[ferredoxin] + CO2 + 2 H(+). Functionally, part of the ACDS complex that catalyzes the reversible cleavage of acetyl-CoA, allowing autotrophic growth from CO(2). The alpha-epsilon subcomponent functions as a carbon monoxide dehydrogenase. The sequence is that of Acetyl-CoA decarbonylase/synthase complex subunit alpha 2 from Archaeoglobus fulgidus (strain ATCC 49558 / DSM 4304 / JCM 9628 / NBRC 100126 / VC-16).